Consider the following 217-residue polypeptide: Lectin ADEL (217 aa).

5 disulfide bridges follow: Cys5/Cys187, Cys42/Cys68, Cys61/Cys77, Cys114/Cys135, and Cys142/Cys206. Asn30 carries N-linked (GlcNAc...) asparagine glycosylation. 2 N-linked (GlcNAc...) asparagine glycosylation sites follow: Asn102 and Asn126.

Homodimer; disulfide-linked. Post-translationally, contains disulfide bonds.

Functionally, binds in decreasing order of affinity: galacturonic acid, D-galactosamine, methyl-alpha-D-galactopyranoside and further galactose-containing carbohydrates. Has hemagglutinating activity against human and rabbit erythrocytes. The protein is Lectin ADEL of Aplysia dactylomela (Spotted sea hare).